Here is a 378-residue protein sequence, read N- to C-terminus: MGQSKKLNKQPSSLSPLVQLAGIRKCFDGKEVIPQLDLTINNGEFLTLLGPSGCGKTTVLRLIAGLETVDSGRIMLDNEDITHVPAENRYVNTVFQSYALFPHMTVFENVAFGLRMQKTPAAEITPRVMEALRMVQLETFAQRKPHQLSGGQQQRVAIARAVVNKPRLLLLDESLSALDYKLRKQMQNELKALQRKLGITFVFVTHDQEEALTMSDRIVVMREGRIEQDGTPREIYEEPKNLFVAGFIGEINMFNATVIERLDEQRVRANVEGRECNIYVNFAVEPGQKLHVLLRPEDLRVEEINDDNHAEGLIGYVRERNYKGMTLESVVELENGKMVMVSEFFNEDDPDFDHSLDQKMAINWVESWEVVLADEEHK.

Residues 18–248 (VQLAGIRKCF…PKNLFVAGFI (231 aa)) enclose the ABC transporter domain. Residue 50 to 57 (GPSGCGKT) participates in ATP binding.

This sequence belongs to the ABC transporter superfamily. Spermidine/putrescine importer (TC 3.A.1.11.1) family. In terms of assembly, the complex is composed of two ATP-binding proteins (PotA), two transmembrane proteins (PotB and PotC) and a solute-binding protein (PotD).

It is found in the cell inner membrane. It catalyses the reaction ATP + H2O + polyamine-[polyamine-binding protein]Side 1 = ADP + phosphate + polyamineSide 2 + [polyamine-binding protein]Side 1.. Its function is as follows. Part of the ABC transporter complex PotABCD involved in spermidine/putrescine import. Responsible for energy coupling to the transport system. The protein is Spermidine/putrescine import ATP-binding protein PotA of Shigella boydii serotype 4 (strain Sb227).